Here is a 112-residue protein sequence, read N- to C-terminus: Prothymosin alpha-B (112 aa).

Residues 1 to 112 (MSDTAVDASV…TKKQKTDEDD (112 aa)) form a disordered region. Positions 9-35 (SVEKSTKDLKAKEKEVVEEAENGKDKP) are enriched in basic and acidic residues. 2 stretches are compositionally biased toward acidic residues: residues 41–83 (ENEE…DEVE) and 92–101 (EDDEDDDDDV). Positions 102–112 (ETKKQKTDEDD) are enriched in basic and acidic residues.

The protein belongs to the pro/parathymosin family.

The protein resides in the nucleus. The sequence is that of Prothymosin alpha-B (ptma-b) from Xenopus laevis (African clawed frog).